Reading from the N-terminus, the 352-residue chain is Schlafen-like protein 4 (352 aa).

Residues 87 to 235 (FEYQSNFSEV…SDKVYQISSG (149 aa)) are SLFN-like fold. A helical membrane pass occupies residues 326-343 (IQNIGWIFFGTALSCCIY).

This sequence belongs to the Schlafen family. As to quaternary structure, component of the PUCH (precursor of 21U RNA 5'-end cleavage holoenzyme) complex; consisting of tofu-1, tofu-2 and either slfl-3 or slfl-4.

The protein resides in the membrane. Functionally, component of the trimeric PUCH (precursor of 21U RNA 5'-end cleavage holoenzyme) complex, that acts as an endoribonuclease processing the 5'-end of precursor Piwi-interacting RNAs (piRNAs). The PUCH complex consists of tofu-1, tofu-2 and either slfl-3 or slfl-4, where tofu-2 exhibits endoribonuclease activity. PUCH-mediated processing strictly requires a 7-methyl-G cap (m7 G-cap) and an uracil at position three (U3). PUCH also exhibits a strict bias for piRNA precursors with an A or G at position 1. Mature piRNA production is enhanced by the interaction of PUCH with the PETISCO complex, which is stabilizing piRNA precursors and allows their processing by PUCH. This Caenorhabditis elegans protein is Schlafen-like protein 4.